Reading from the N-terminus, the 145-residue chain is Ribosomal RNA large subunit methyltransferase H (145 aa).

S-adenosyl-L-methionine is bound by residues Leu68, Gly95, and 113–118 (FSKMTF).

The protein belongs to the RNA methyltransferase RlmH family. In terms of assembly, homodimer.

The protein resides in the cytoplasm. The enzyme catalyses pseudouridine(1915) in 23S rRNA + S-adenosyl-L-methionine = N(3)-methylpseudouridine(1915) in 23S rRNA + S-adenosyl-L-homocysteine + H(+). Functionally, specifically methylates the pseudouridine at position 1915 (m3Psi1915) in 23S rRNA. The sequence is that of Ribosomal RNA large subunit methyltransferase H from Mycoplasmopsis pulmonis (strain UAB CTIP) (Mycoplasma pulmonis).